The following is a 318-amino-acid chain: Adenylate isopentenyltransferase 4 (318 aa).

Position 12 to 19 (12 to 19 (GATGSGKS)) interacts with ATP.

This sequence belongs to the IPP transferase family. Mg(2+) is required as a cofactor. In terms of tissue distribution, expressed in immature seeds with highest expression in the chalazal endosperm.

Its subcellular location is the cytoplasm. It carries out the reaction dimethylallyl diphosphate + ADP = N(6)-(dimethylallyl)adenosine 5'-diphosphate + diphosphate. It catalyses the reaction dimethylallyl diphosphate + ATP = N(6)-(dimethylallyl)adenosine 5'-triphosphate + diphosphate. Involved in cytokinin biosynthesis. Catalyzes the transfer of an isopentenyl group from dimethylallyl diphosphate (DMAPP) to ATP and ADP, but not to AMP. Has no DMAPP:tRNA isopentenyltransferase activity. The chain is Adenylate isopentenyltransferase 4 (IPT4) from Arabidopsis thaliana (Mouse-ear cress).